Consider the following 423-residue polypeptide: Ferrochelatase, mitochondrial (423 aa).

Residues 1 to 54 constitute a mitochondrion transit peptide; that stretch reads MRSLGANMAAALRAAGVLLRDPLASSSWRVCQPWRWKSGAAAAAVTTETAQHAQ. Lys57 carries the post-translational modification N6-acetyllysine. Residues Arg115, Tyr123, and Ser130 each coordinate protoporphyrin IX. Residue Lys138 is modified to N6-succinyllysine. A [2Fe-2S] cluster-binding site is contributed by Cys196. Catalysis depends on residues His230 and Asp383. [2Fe-2S] cluster contacts are provided by Cys403, Cys406, and Cys411. Residue Lys415 is modified to N6-acetyllysine; alternate. Lys415 bears the N6-succinyllysine; alternate mark.

It belongs to the ferrochelatase family. Homodimer. Homotetramer. Interacts with PGRMC1; the interaction results in decreased FECH activity. Interacts with ABCB10 and SLC25A37; this interaction forms an oligomeric complex. Forms a complex with ABCB7 and ABCB10, where a dimeric FECH bridges ABCB7 and ABCB10 homodimers; this complex may be required for cellular iron homeostasis, mitochondrial function and heme biosynthesis. Interacts with ABCB7 and ABCB10. Requires [2Fe-2S] cluster as cofactor.

The protein localises to the mitochondrion inner membrane. It catalyses the reaction heme b + 2 H(+) = protoporphyrin IX + Fe(2+). The protein operates within porphyrin-containing compound metabolism; protoheme biosynthesis; protoheme from protoporphyrin-IX: step 1/1. With respect to regulation, inhibited by nitric oxide (NO). The 2Fe-2S cluster could act as a NO sensor. In terms of biological role, catalyzes the ferrous insertion into protoporphyrin IX and participates in the terminal step in the heme biosynthetic pathway. This Homo sapiens (Human) protein is Ferrochelatase, mitochondrial.